A 468-amino-acid polypeptide reads, in one-letter code: Mothers against decapentaplegic homolog 1 (468 aa).

The residue at position 1 (M1) is an N-acetylmethionine. In terms of domain architecture, MH1 spans 12 to 136 (PAVKRLLGWK…YKRVESPVLP (125 aa)). Positions 64, 109, 121, and 126 each coordinate Zn(2+). The disordered stretch occupies residues 162 to 246 (NEPHMPLNAT…DGSQPMDTNM (85 aa)). The segment covering 188–210 (PNSSYPNSPGSSSSTYPHSPTSS) has biased composition (low complexity). The segment covering 221–232 (DTPPPAYLPPED) has biased composition (pro residues). A compositionally biased stretch (polar residues) spans 237-246 (DGSQPMDTNM). Positions 274 to 468 (WCSIVYYELN…SPHNPISSVS (195 aa)) constitute an MH2 domain. T325 bears the Phosphothreonine; by MINK1, TNIK and MAP4K4 mark. An L3 loop region spans residues 421-431 (KGWGAEYHRQD). Residues S466 and S468 each carry the phosphoserine modification.

This sequence belongs to the dwarfin/SMAD family. In terms of assembly, found in a complex with SMAD4 and YY1. Interacts with HGS, NANOG and ZCCHC12. Upon C-terminus phosphorylation: forms trimers with another SMAD1 and the co-SMAD SMAD4. Interacts with PEBP2-alpha subunit, CREB-binding protein (CBP), p300, SMURF1, SMURF2, USP15 and HOXC8. Associates with ZNF423 or ZNF521 in response to BMP2 leading to activate transcription of BMP target genes. Interacts with SKOR1. Interacts (via MH2 domain) with LEMD3. Binding to LEMD3 results in at least a partial reduction of receptor-mediated phosphorylation. Forms a ternary complex with PSMB4 and OAZ1 before PSMB4 is incorporated into the 20S proteasome. Interacts (via MH2 domain) with FAM83G (via MH2 domain); in a SMAD4-independent manner. Interacts with ZC3H3. Interacts with TMEM119. Interacts (via MH1 and MH2 domains) with ZNF8. Interacts with RANBP3L; the interaction increases when SMAD1 is not phosphorylated and mediates SMAD1 nuclear export. Interacts with EGR1; this interaction inhibits SMAD1 dephosphorylation. Interacts with SMAD6. Interacts with YAP1. Interacts with MTMR4; negatively regulates BMP signaling through SMAD1 dephosphorylation and retention in endosomes. In terms of processing, phosphorylation of the C-terminal SVS motif by BMP type 1 receptor kinase activates SMAD1 by promoting dissociation from the receptor and trimerization with SMAD4. Phosphorylation by ERK2 MAP kinase in response to EGF or HGF prevents SMAD1 nuclear accumulation and transcriptional activity in response to BMP. Dephosphorylation, probably by PPM1A, induces its export from the nucleus to the cytoplasm. Dephosphorylation is inhibited by association with EGR1. Phosphorylation by CDK8/9 creates binding sites for YAP1, and subsequent phosphorylation by GSK3 switches off YAP1 binding and adds binding sites for SMURF1. Post-translationally, ubiquitinated by SMAD-specific E3 ubiquitin ligase SMURF1, leading to its degradation. Monoubiquitinated, leading to prevent DNA-binding. Deubiquitination by USP15 alleviates inhibition and promotes activation of TGF-beta target genes. Dephosphorylation, probably by PPM1A, induces its export from the nucleus to the cytoplasm. Phospho-SMAD1 is ubiquitinated by CHIP leading to disruption of the SMAD1-SMAD4 complex. As to expression, ubiquitous; present in liver, lung, stomach and spleen with lower level in heart, testes and skeletal muscle.

Its subcellular location is the cytoplasm. The protein resides in the nucleus. Its function is as follows. Transcriptional modulator that plays a role in various cellular processes, including embryonic development, cell differentiation, and tissue homeostasis. Upon BMP ligand binding to their receptors at the cell surface, is phosphorylated by activated type I BMP receptors (BMPRIs) and associates with SMAD4 to form an heteromeric complex which translocates into the nucleus acting as transcription factor. In turn, the hetero-trimeric complex recognizes cis-regulatory elements containing Smad Binding Elements (SBEs) to modulate the outcome of the signaling network. SMAD1/OAZ1/PSMB4 complex mediates the degradation of the CREBBP/EP300 repressor SNIP1. Positively regulates BMP4-induced expression of odontogenic development regulator MSX1 following IPO7-mediated nuclear import. This chain is Mothers against decapentaplegic homolog 1 (Smad1), found in Rattus norvegicus (Rat).